We begin with the raw amino-acid sequence, 118 residues long: Large ribosomal subunit protein bL20 (118 aa).

It belongs to the bacterial ribosomal protein bL20 family.

Its function is as follows. Binds directly to 23S ribosomal RNA and is necessary for the in vitro assembly process of the 50S ribosomal subunit. It is not involved in the protein synthesizing functions of that subunit. The protein is Large ribosomal subunit protein bL20 of Francisella philomiragia subsp. philomiragia (strain ATCC 25017 / CCUG 19701 / FSC 153 / O#319-036).